A 663-amino-acid chain; its full sequence is MTMVEHYPFKIHSDFEPQGDQPQAIEEIVEGIKAGKRHQTLLGATGTGKTFTMSNVIKEVGKPTLIIAHNKTLAGQLYSEFKEFFPENRVEYFVSYYDYYQPEAYVPSTDTFIEKDASINDEIDQLRHSATSALFERDDVIIIASVSCIYGLGNPEEYKDLVVSVRVGMEMDRSELLRKLVDVQYTRNDIDFQRGTFRVRGDVVEIFPASKEELCIRVEFFGDEIDRIREVNYLTGEVLKEREHFAIFPASHFVTREEKLKVAIERIEKELEERLKELRDENKLLEAQRLEQRTNYDLEMMREMGFCSGIENYSVHLTLRPLGSTPYTLLDYFGDDWLVMIDESHVTLPQVRGMYNGDRARKQVLVDHGFRLPSALDNRPLKFEEFEEKTKQLVYVSATPGPYEIEHTDKMVEQIIRPTGLLDPKIEVRPTENQIDDLLSEIQTRVERNERVLVTTLTKKMSEDLTTYMKEAGIKVNYLHSEIKTLERIEIIRDLRMGTYDVIVGINLLREGIDIPEVSLVVILDADKEGFLRSNRSLIQTIGRAARNDKGEVIMYADKMTDSMKYAIDETQRRREIQMKHNEKHGITPKTINKKIHDLISATVENDENNDKAQTVIPKKMTKKERQKTIDNIEKEMKQAAKDLDFEKATELRDMLFELKAEG.

A Helicase ATP-binding domain is found at 30 to 414 (EGIKAGKRHQ…IEHTDKMVEQ (385 aa)). Position 43–50 (43–50 (GATGTGKT)) interacts with ATP. Residues 96–119 (YYDYYQPEAYVPSTDTFIEKDASI) carry the Beta-hairpin motif. The region spanning 434 to 600 (QIDDLLSEIQ…TINKKIHDLI (167 aa)) is the Helicase C-terminal domain. In terms of domain architecture, UVR spans 627 to 662 (QKTIDNIEKEMKQAAKDLDFEKATELRDMLFELKAE).

This sequence belongs to the UvrB family. As to quaternary structure, forms a heterotetramer with UvrA during the search for lesions. Interacts with UvrC in an incision complex.

It is found in the cytoplasm. In terms of biological role, the UvrABC repair system catalyzes the recognition and processing of DNA lesions. A damage recognition complex composed of 2 UvrA and 2 UvrB subunits scans DNA for abnormalities. Upon binding of the UvrA(2)B(2) complex to a putative damaged site, the DNA wraps around one UvrB monomer. DNA wrap is dependent on ATP binding by UvrB and probably causes local melting of the DNA helix, facilitating insertion of UvrB beta-hairpin between the DNA strands. Then UvrB probes one DNA strand for the presence of a lesion. If a lesion is found the UvrA subunits dissociate and the UvrB-DNA preincision complex is formed. This complex is subsequently bound by UvrC and the second UvrB is released. If no lesion is found, the DNA wraps around the other UvrB subunit that will check the other stand for damage. In Staphylococcus aureus (strain MSSA476), this protein is UvrABC system protein B.